The following is a 655-amino-acid chain: Ribonuclease 3 (655 aa).

2 disordered regions span residues 1 to 148 and 171 to 376; these read MENL…NSEK and LIAP…NIPL. Positions 1 to 400 are unknown; it reads MENLEKNTKK…NYIKDNYPVI (400 aa). Basic residues predominate over residues 8–20; sequence TKKKIKKPNNFKK. Basic and acidic residues-rich tracts occupy residues 21–34 and 69–89; these read NNKD…DKPT and DYEK…RSDE. Residues 92–102 are compositionally biased toward low complexity; that stretch reads NNNSKKQNNNK. Positions 103–115 are enriched in basic residues; the sequence is QAKKKANKNKKQK. Residues 135-148 show a composition bias toward polar residues; sequence AANNQVKAIPNSEK. The span at 206–223 shows a compositional bias: low complexity; that stretch reads NNFVNNQKNHNKNNAGNK. 2 stretches are compositionally biased toward polar residues: residues 229–242 and 250–259; these read PTKP…SKST and PNFTSNQPKP. Basic and acidic residues-rich tracts occupy residues 260-274 and 298-309; these read TQKE…KKAE and DQTKKKQPKENK. A compositionally biased stretch (low complexity) spans 310–332; that stretch reads NQQIKAVNLNNNQQKTNNNNQKN. Over residues 333–350 the composition is skewed to basic and acidic residues; that stretch reads SVDKSENDNNKKKSEANQ. The span at 351–360 shows a compositional bias: low complexity; the sequence is KQENLNPNNN. The interval 401 to 655 is RNase 3; the sequence is YADLKEKNRL…KFRGLLKLEK (255 aa). The 125-residue stretch at 432–556 folds into the RNase III domain; the sequence is LELLLKKFKV…FIGAMYLDQG (125 aa). Glu472 contacts Mg(2+). The active site involves Asp476. Asp542 and Glu545 together coordinate Mg(2+). Glu545 is a catalytic residue. A DRBM domain is found at 582–649; the sequence is DYKSIFQEII…AKEAISKFRG (68 aa).

This sequence belongs to the ribonuclease III family. In terms of assembly, homodimer. It depends on Mg(2+) as a cofactor.

It localises to the cytoplasm. It catalyses the reaction Endonucleolytic cleavage to 5'-phosphomonoester.. Its function is as follows. Digests double-stranded RNA. Involved in the processing of primary rRNA transcript to yield the immediate precursors to the large and small rRNAs (23S and 16S). Processes some mRNAs, and tRNAs when they are encoded in the rRNA operon. Processes pre-crRNA and tracrRNA of type II CRISPR loci if present in the organism. The polypeptide is Ribonuclease 3 (rnc) (Mycoplasmoides gallisepticum (strain R(low / passage 15 / clone 2)) (Mycoplasma gallisepticum)).